Reading from the N-terminus, the 384-residue chain is 5-cytosine rRNA methyltransferase NSUN4 (384 aa).

The N-terminal 25 residues, methionine 1–glutamine 25, are a transit peptide targeting the mitochondrion. 4 residues coordinate S-adenosyl-L-methionine: glycine 185, glycine 186, lysine 187, and aspartate 204. Serine 206 is modified (phosphoserine). Residues arginine 209, aspartate 237, glycine 238, and aspartate 255 each contribute to the S-adenosyl-L-methionine site. The active-site Nucleophile is cysteine 310.

This sequence belongs to the class I-like SAM-binding methyltransferase superfamily. RsmB/NOP family. As to quaternary structure, heterodimer with MTERFD2/MTERF4; this interaction seems to be required for NSUN4 recruitment to the mitochondrial large ribosomal subunit.

The protein resides in the mitochondrion. The catalysed reaction is a cytidine in rRNA + S-adenosyl-L-methionine = a 5-methylcytidine in rRNA + S-adenosyl-L-homocysteine + H(+). It catalyses the reaction a cytidine in mRNA + S-adenosyl-L-methionine = a 5-methylcytidine in mRNA + S-adenosyl-L-homocysteine + H(+). Its function is as follows. Mitochondrial RNA cytosine C(5)-methyltransferase that methylates cytosine to 5-methylcytosine (m5C) in various RNAs, such as rRNAs, mRNAs and some long non-coding RNAs (lncRNAs). Involved in mitochondrial ribosome small subunit (SSU) maturation by catalyzing methylation of mitochondrial 12S rRNA; the function is independent of MTERFD2/MTERF4 and assembled mitochondrial ribosome large subunit (LSU). Targeted to LSU by MTERFD2/MTERF4 and probably is involved in a final step in ribosome biogenesis to ensure that SSU and LSU are assembled. In vitro can methylate 16S rRNA of the LSU; the methylation is enhanced by MTERFD/MTERF4. Also acts as a regulator of innate immunity by marking double-stranded mitochondrial RNAs(mt-dsRNAs) generated in response to stress: catalyzes m5C modification on mitochondrial RNAs, such as a mRNAs and lncRNAs, with a preference for the termini of light-strand lncRNAs, promoting their degradation and cytosolic release. Modified light-strand lncRNAs are then recognized by C1QBP reader and recruited to the mitochondrial degradosome complex, which promotes their degradation. The protein is 5-cytosine rRNA methyltransferase NSUN4 (NSUN4) of Bos taurus (Bovine).